The sequence spans 461 residues: Argininosuccinate lyase (461 aa).

This sequence belongs to the lyase 1 family. Argininosuccinate lyase subfamily.

It is found in the cytoplasm. It carries out the reaction 2-(N(omega)-L-arginino)succinate = fumarate + L-arginine. It participates in amino-acid biosynthesis; L-arginine biosynthesis; L-arginine from L-ornithine and carbamoyl phosphate: step 3/3. This is Argininosuccinate lyase from Dehalococcoides mccartyi (strain ATCC BAA-2100 / JCM 16839 / KCTC 5957 / BAV1).